The primary structure comprises 229 residues: Cytidylate kinase (229 aa).

Residue 12 to 20 (GPSGAGKGT) coordinates ATP.

This sequence belongs to the cytidylate kinase family. Type 1 subfamily.

The protein resides in the cytoplasm. It catalyses the reaction CMP + ATP = CDP + ADP. The enzyme catalyses dCMP + ATP = dCDP + ADP. The protein is Cytidylate kinase of Pseudomonas paraeruginosa (strain DSM 24068 / PA7) (Pseudomonas aeruginosa (strain PA7)).